Consider the following 312-residue polypeptide: Ribosomal RNA small subunit methyltransferase H (312 aa).

Residues 32-34 (AGH), aspartate 52, phenylalanine 79, aspartate 100, and glutamine 107 contribute to the S-adenosyl-L-methionine site.

This sequence belongs to the methyltransferase superfamily. RsmH family.

It is found in the cytoplasm. It catalyses the reaction cytidine(1402) in 16S rRNA + S-adenosyl-L-methionine = N(4)-methylcytidine(1402) in 16S rRNA + S-adenosyl-L-homocysteine + H(+). In terms of biological role, specifically methylates the N4 position of cytidine in position 1402 (C1402) of 16S rRNA. In Listeria monocytogenes serotype 4b (strain CLIP80459), this protein is Ribosomal RNA small subunit methyltransferase H.